A 1269-amino-acid chain; its full sequence is Protein cramped-like (1269 aa).

The span at 1–12 (MTVKLGDGGSGE) shows a compositional bias: gly residues. The segment at 1-165 (MTVKLGDGGS…GKKVRRQWES (165 aa)) is disordered. 2 stretches are compositionally biased toward basic and acidic residues: residues 13 to 24 (DGLKKLGKRAAD) and 43 to 52 (SGTKRDEKTP). Over residues 59-74 (PPAPPGAPQAPSPPQG) the composition is skewed to pro residues. Over residues 105–123 (GNAGGSGPRGKGAEGGGSS) the composition is skewed to gly residues. Low complexity predominate over residues 124–147 (SGNVSGVAPAAPAGGSRSSSRNLG). Residues 151–165 (GEKEEGKKVRRQWES) are compositionally biased toward basic and acidic residues. Residues 161 to 224 (RQWESWSTED…FYYRTWHKIT (64 aa)) enclose the SANT domain. The residue at position 307 (S307) is a Phosphoserine. Disordered stretches follow at residues 450 to 541 (IQSG…PGAL), 581 to 666 (DTRP…EVPA), 757 to 827 (VRPA…NDSD), 976 to 1034 (EGLS…DSFQ), 1055 to 1092 (IPLS…SQGE), and 1115 to 1157 (VPLS…PSDS). Residues 485–507 (SSGESSPESAPGEGAALSLSSPD) show a composition bias toward low complexity. Basic and acidic residues-rich tracts occupy residues 508–518 (APDRPPPRHQD) and 526–535 (TPAEGRDSPT). 3 stretches are compositionally biased toward polar residues: residues 757-767 (VRPAQEEQSMT), 774-806 (TVSS…SSGL), and 982-1002 (SPLS…TGTH). Composition is skewed to low complexity over residues 1055 to 1070 (IPLS…LSPP) and 1125 to 1140 (SDSS…SPQP). Residue S1268 is modified to Phosphoserine.

Belongs to the cramped family.

The protein localises to the nucleus. The protein is Protein cramped-like of Homo sapiens (Human).